A 691-amino-acid polypeptide reads, in one-letter code: Threonine--tRNA ligase (691 aa).

Positions 1–69 (MSTPEITPAA…QQDVEVAAVP (69 aa)) constitute a TGS domain. Residues 268 to 574 (DHRRLGQELD…LLEHYAGAFP (307 aa)) form a catalytic region. Cys-373, His-424, and His-551 together coordinate Zn(2+).

It belongs to the class-II aminoacyl-tRNA synthetase family. In terms of assembly, homodimer. The cofactor is Zn(2+).

It localises to the cytoplasm. It catalyses the reaction tRNA(Thr) + L-threonine + ATP = L-threonyl-tRNA(Thr) + AMP + diphosphate + H(+). Catalyzes the attachment of threonine to tRNA(Thr) in a two-step reaction: L-threonine is first activated by ATP to form Thr-AMP and then transferred to the acceptor end of tRNA(Thr). Also edits incorrectly charged L-seryl-tRNA(Thr). The sequence is that of Threonine--tRNA ligase from Corynebacterium jeikeium (strain K411).